Consider the following 561-residue polypeptide: Carbohydrate sulfotransferase 15 (561 aa).

Topologically, residues 1 to 80 (MRHCINCCIQ…FLRFRKGKRC (80 aa)) are cytoplasmic. A helical; Signal-anchor for type II membrane protein membrane pass occupies residues 81–101 (SLVFGLIIMTLVMASYILSGA). Over 102 to 561 (HQELLISSPF…DDEAFAWKTT (460 aa)) the chain is Lumenal. 263–267 (KCGTT) lines the 3'-phosphoadenylyl sulfate pocket. Asn364 carries N-linked (GlcNAc...) asparagine glycosylation. 2 residues coordinate 3'-phosphoadenylyl sulfate: Arg392 and Ser400.

This sequence belongs to the sulfotransferase 1 family. Homodimer; disulfide-linked (Potential). The relevance of homodimerization is however unsure. May interact with phosphorylated proteins in resting B-cells, including HCK. The cofactor is a divalent metal cation. Requires glutathione as cofactor. In terms of processing, glycosylated.

It localises to the golgi apparatus membrane. It carries out the reaction dermatan 4'-sulfate + n 3'-phosphoadenylyl sulfate = dermatan 4',6'-bissulfate + n adenosine 3',5'-bisphosphate + n H(+). The catalysed reaction is chondroitin 4'-sulfate + n 3'-phosphoadenylyl sulfate = chondroitin 4',6'-bissulfate + n adenosine 3',5'-bisphosphate + n H(+). Its activity is regulated as follows. Inhibited by phenyl beta-GalNAc(4,6-SO(4)). Sulfotransferase that transfers sulfate from 3'-phosphoadenosine 5'-phosphosulfate (PAPS) to the C-6 hydroxyl group of the GalNAc 4-sulfate residue of chondroitin sulfate A and forms chondroitin sulfate E containing GlcA-GalNAc(4,6-SO(4)) repeating units. It also transfers sulfate to a unique non-reducing terminal sequence, GalNAc(4SO4)-GlcA(2SO4)-GalNAc(6SO4), to yield a highly sulfated structure similar to the structure found in thrombomodulin chondroitin sulfate. May also act as a B-cell receptor involved in BCR ligation-mediated early activation that mediate regulatory signals key to B-cell development and/or regulation of B-cell-specific RAG expression; however such results are unclear in vivo. This is Carbohydrate sulfotransferase 15 (Chst15) from Rattus norvegicus (Rat).